The primary structure comprises 501 residues: Membrane-bound lytic murein transglycosylase F (501 aa).

Residues M1 to A29 form the signal peptide. The interval A30–L274 is non-LT domain. The tract at residues G275–L501 is LT domain. E321 is a catalytic residue.

In the N-terminal section; belongs to the bacterial solute-binding protein 3 family. The protein in the C-terminal section; belongs to the transglycosylase Slt family.

The protein localises to the cell outer membrane. It carries out the reaction Exolytic cleavage of the (1-&gt;4)-beta-glycosidic linkage between N-acetylmuramic acid (MurNAc) and N-acetylglucosamine (GlcNAc) residues in peptidoglycan, from either the reducing or the non-reducing ends of the peptidoglycan chains, with concomitant formation of a 1,6-anhydrobond in the MurNAc residue.. In terms of biological role, murein-degrading enzyme that degrades murein glycan strands and insoluble, high-molecular weight murein sacculi, with the concomitant formation of a 1,6-anhydromuramoyl product. Lytic transglycosylases (LTs) play an integral role in the metabolism of the peptidoglycan (PG) sacculus. Their lytic action creates space within the PG sacculus to allow for its expansion as well as for the insertion of various structures such as secretion systems and flagella. The protein is Membrane-bound lytic murein transglycosylase F of Saccharophagus degradans (strain 2-40 / ATCC 43961 / DSM 17024).